Here is a 795-residue protein sequence, read N- to C-terminus: Serine/threonine-protein kinase MARK1 (795 aa).

The tract at residues 1 to 41 (MSARTPLPTVNERDTENHTSVDGYTETHIPPAKSSSRQNLP) is disordered. Thr5 is modified (phosphothreonine). The Protein kinase domain occupies 60–311 (YRLQKTIGKG…LEQIMKDRWM (252 aa)). ATP-binding positions include 66 to 74 (IGKGNFAKV) and Lys89. The active-site Proton acceptor is the Asp182. Thr208 bears the Phosphothreonine mark. Thr215 is subject to Phosphothreonine; by LKB1 and TAOK1. Ser219 is subject to Phosphoserine; by GSK3-beta. Residues 329 to 370 (DLSDAKRIDIMVTMGFARDEINDALVSQKYDEVMATYILLGR) enclose the UBA domain. Disordered stretches follow at residues 377 to 498 (GGES…SGGS) and 518 to 699 (QNGR…KPRS). Phosphoserine occurs at positions 382, 390, 393, 403, 423, and 444. Over residues 387-403 (CQRSRPSSDLNNSTLQS) the composition is skewed to polar residues. Residues 447–459 (SEQKEEWGKDTAR) are compositionally biased toward basic and acidic residues. Residues 462 to 473 (GSTTVGSKSEVT) are compositionally biased toward polar residues. A Phosphoserine modification is found at Ser475. Polar residues predominate over residues 486–495 (TASPSNNVYS). 2 stretches are compositionally biased toward low complexity: residues 523–547 (SSLTEMSASSMSSAGSTVASAGPSA) and 585–599 (PAASPSAHSISASTP). The residue at position 588 (Ser588) is a Phosphoserine. Thr613 is modified (phosphothreonine; by PKC/PRKCZ). Polar residues predominate over residues 647-657 (GTSTGIISKIT). Composition is skewed to basic and acidic residues over residues 661-676 (VRRDPSEGEASGRADT) and 683-697 (DPKERDKDEGKEAKP). Phosphoserine is present on Ser666. The 50-residue stretch at 746 to 795 (DARQDSLVQWEMEVCKLPRLSLNGVRFKRISGTSIAFKNIASKIANELKL) folds into the KA1 domain.

Belongs to the protein kinase superfamily. CAMK Ser/Thr protein kinase family. SNF1 subfamily. Interacts with MAPT/TAU. Mg(2+) is required as a cofactor. Post-translationally, phosphorylated at Thr-215 by STK11/LKB1 in complex with STE20-related adapter-alpha (STRADA) pseudo kinase and CAB39. Phosphorylation at Thr-215 by TAOK1 activates the kinase activity, leading to phosphorylation and detachment of MAPT/TAU from microtubules. Phosphorylation at Ser-219 by GSK3-beta (GSK3B) inhibits the kinase activity. Phosphorylation at Thr-613 by PRKCZ/aPKC in polarized epithelial cells inhibits the kinase activity.

It localises to the cell membrane. It is found in the cytoplasm. The protein resides in the cytoskeleton. The protein localises to the cell projection. Its subcellular location is the dendrite. The catalysed reaction is L-seryl-[protein] + ATP = O-phospho-L-seryl-[protein] + ADP + H(+). It catalyses the reaction L-threonyl-[protein] + ATP = O-phospho-L-threonyl-[protein] + ADP + H(+). It carries out the reaction L-seryl-[tau protein] + ATP = O-phospho-L-seryl-[tau protein] + ADP + H(+). The enzyme catalyses L-threonyl-[tau protein] + ATP = O-phospho-L-threonyl-[tau protein] + ADP + H(+). With respect to regulation, inhibited by phosphorylation at Ser-219. Activated by phosphorylation on Thr-215. In terms of biological role, serine/threonine-protein kinase. Involved in cell polarity and microtubule dynamics regulation. Phosphorylates DCX, MAP2 and MAP4. Phosphorylates the microtubule-associated protein MAPT/TAU. Involved in cell polarity by phosphorylating the microtubule-associated proteins MAP2, MAP4 and MAPT/TAU at KXGS motifs, causing detachment from microtubules, and their disassembly. Involved in the regulation of neuronal migration through its dual activities in regulating cellular polarity and microtubule dynamics, possibly by phosphorylating and regulating DCX. Also acts as a positive regulator of the Wnt signaling pathway, probably by mediating phosphorylation of dishevelled proteins (DVL1, DVL2 and/or DVL3). The polypeptide is Serine/threonine-protein kinase MARK1 (Mus musculus (Mouse)).